The chain runs to 496 residues: Glutamate--tRNA ligase 2 (496 aa).

Residues 13 to 23 carry the 'HIGH' region motif; it reads PSPTGRLHVGG. The 'KMSKS' region signature appears at 255-259; sequence KLSKR. Lysine 258 is an ATP binding site.

It belongs to the class-I aminoacyl-tRNA synthetase family. Glutamate--tRNA ligase type 1 subfamily. As to quaternary structure, monomer.

It localises to the cytoplasm. The catalysed reaction is tRNA(Glu) + L-glutamate + ATP = L-glutamyl-tRNA(Glu) + AMP + diphosphate. In terms of biological role, catalyzes the attachment of glutamate to tRNA(Glu) in a two-step reaction: glutamate is first activated by ATP to form Glu-AMP and then transferred to the acceptor end of tRNA(Glu). This chain is Glutamate--tRNA ligase 2, found in Rubrobacter xylanophilus (strain DSM 9941 / JCM 11954 / NBRC 16129 / PRD-1).